A 441-amino-acid chain; its full sequence is Tol-Pal system protein TolB (441 aa).

A signal peptide spans M1–A39.

Belongs to the TolB family. The Tol-Pal system is composed of five core proteins: the inner membrane proteins TolA, TolQ and TolR, the periplasmic protein TolB and the outer membrane protein Pal. They form a network linking the inner and outer membranes and the peptidoglycan layer.

The protein resides in the periplasm. In terms of biological role, part of the Tol-Pal system, which plays a role in outer membrane invagination during cell division and is important for maintaining outer membrane integrity. The protein is Tol-Pal system protein TolB of Bordetella bronchiseptica (strain ATCC BAA-588 / NCTC 13252 / RB50) (Alcaligenes bronchisepticus).